The primary structure comprises 311 residues: 4-hydroxyproline 2-epimerase (311 aa).

Catalysis depends on Cys-89, which acts as the Proton acceptor. Substrate is bound by residues 90–91 (GH), His-209, and Asp-233. Residue Cys-237 is the Proton donor of the active site. Residue 238–239 (GT) participates in substrate binding.

Belongs to the proline racemase family.

The enzyme catalyses trans-4-hydroxy-L-proline = cis-4-hydroxy-D-proline. In terms of biological role, catalyzes the epimerization of trans-4-hydroxy-L-proline (t4LHyp) to cis-4-hydroxy-D-proline (c4DHyp). Is likely involved in a degradation pathway that converts t4LHyp to alpha-ketoglutarate. Displays no proline racemase activity. In Burkholderia ambifaria (strain ATCC BAA-244 / DSM 16087 / CCUG 44356 / LMG 19182 / AMMD) (Burkholderia cepacia (strain AMMD)), this protein is 4-hydroxyproline 2-epimerase.